A 473-amino-acid polypeptide reads, in one-letter code: 3-isopropylmalate dehydratase large subunit (473 aa).

Cysteine 354, cysteine 414, and cysteine 417 together coordinate [4Fe-4S] cluster.

The protein belongs to the aconitase/IPM isomerase family. LeuC type 1 subfamily. Heterodimer of LeuC and LeuD. It depends on [4Fe-4S] cluster as a cofactor.

The catalysed reaction is (2R,3S)-3-isopropylmalate = (2S)-2-isopropylmalate. It participates in amino-acid biosynthesis; L-leucine biosynthesis; L-leucine from 3-methyl-2-oxobutanoate: step 2/4. Functionally, catalyzes the isomerization between 2-isopropylmalate and 3-isopropylmalate, via the formation of 2-isopropylmaleate. The polypeptide is 3-isopropylmalate dehydratase large subunit (Rhodopseudomonas palustris (strain BisB18)).